The chain runs to 1247 residues: Catenin delta-2 (1247 aa).

3 disordered regions span residues 1-50, 134-238, and 256-309; these read MFAR…TTSA, SGIL…SAFH, and LPAP…KSYS. Ser7 is modified (phosphoserine). Polar residues predominate over residues 22 to 50; it reads PSASEKNSSLSPGLNTSNGDGSETETTSA. A coiled-coil region spans residues 49–84; sequence SAILASVKEQELQFERLTRELEAERQIVASQLERCK. Over residues 149–160 the composition is skewed to low complexity; it reads SLLSQSALQLNS. Over residues 172 to 207 the composition is skewed to polar residues; it reads YHSNQTLALGDTAPSQLPARSTQARAAGQSFSQGTT. An Omega-N-methylarginine modification is found at Arg209. The segment covering 218–228 has biased composition (pro residues); the sequence is PAPPPPPPREP. Arg261 carries the omega-N-methylarginine modification. 2 positions are modified to phosphoserine: Ser264 and Ser273. A compositionally biased stretch (polar residues) spans 265-276; that stretch reads PLTTTQGGSPTK. Arg279 and Arg293 each carry omega-N-methylarginine. Residues 296 to 309 are compositionally biased toward polar residues; that stretch reads SPKQSPSRLAKSYS. Ser324, Ser357, Ser412, and Ser458 each carry phosphoserine. Residues 391-433 form an ARM 1 repeat; that stretch reads GSRASYSSQHGHLAPELRALQSPEHHIDPIYEDRVYQKPPMRS. Positions 429–480 are disordered; the sequence is PPMRSLSQSQGDPLPPAHTGTFRTSTAPSSPGVDSVPLQRTGSQHGPQNAAA. Positions 466-475 are enriched in polar residues; it reads LQRTGSQHGP. Ser511 is modified (phosphoserine). A Phosphotyrosine modification is found at Tyr513. Residues 514–533 form a disordered region; it reads SKSGPALPPEGTLARSPSID. ARM repeat units follow at residues 537-576, 579-618, 623-663, 679-721, 725-770, 832-872, 904-943, and 997-1040; these read KDPR…HLCF, NKIK…NLVY, DDNK…NLSS, LTNA…NVSS, EARR…NLSY, PKGI…NLAA, VYIR…NMAL, and MENA…SMWQ. Disordered regions lie at residues 1064–1131 and 1152–1176; these read TIER…HTSR and APAE…RKDY. A compositionally biased stretch (polar residues) spans 1072–1081; it reads PYSSSRTPSI. 2 positions are modified to phosphoserine: Ser1087 and Ser1098. Low complexity predominate over residues 1087-1100; it reads SPNNRSASAPASPR. A compositionally biased stretch (basic and acidic residues) spans 1103–1112; the sequence is ISLKERKTDY.

This sequence belongs to the beta-catenin family. As to quaternary structure, binds to E-cadherin at a juxtamembrane site within the cytoplasmic domain. Binds to PSEN1. Interacts with PDZD2. Interacts (via the extreme C-terminus) with FRMPD2 (via the PDZ 2 domain). Interacts with ZBTB33. Interacts with ARHGEF28. Interacts with CDK5. Interacts with CTNNB1. Interacts with GSK3A and GSK3B. Interacts with DNM2. Interacts with CCDC85B. Post-translationally, O-glycosylated. In terms of processing, phosphorylated by CDK5. Phosphorylated by GSK3B. As to expression, expressed in neurons and glial cells. Isoform 2 was found to be the most predominant isoform in various brain regions. Expressed at neuromuscular junctions.

The protein resides in the nucleus. The protein localises to the cell junction. It localises to the adherens junction. Its subcellular location is the cell projection. It is found in the dendrite. The protein resides in the perikaryon. In terms of biological role, has a critical role in neuronal development, particularly in the formation and/or maintenance of dendritic spines and synapses. Involved in the regulation of canonical Wnt signaling. It probably acts on beta-catenin turnover, facilitating beta-catenin interaction with GSK3B, phosphorylation, ubiquitination and degradation. May be involved in neuronal cell adhesion and tissue morphogenesis and integrity by regulating adhesion molecules. Functions as a transcriptional activator when bound to ZBTB33. In Mus musculus (Mouse), this protein is Catenin delta-2 (Ctnnd2).